The chain runs to 38 residues: AIAVELARDVFEAIQTLSRGSVFQDMPLVSNKELMDLR.

The antimicrobial activity of BAC79 was completely lost after treatment with enzymes trypsin, pepsin, proteinase-K, and carboxypeptidase, while there was no loss of activity with either amylase or lipase. Its function is as follows. Has antibacterial activity against a wide spectrum of Gram-positive and Gram-negative bacteria, including L.monocytogenes which is inhibited through disruption of the cell membrane. This is Bacteriocin BAC79 from Weissella confusa (Lactobacillus confusus).